The sequence spans 622 residues: Protein FAM234B (622 aa).

The disordered stretch occupies residues 1-68 (MATVLSRALK…EPDSDAEVAE (68 aa)). S16 is subject to Phosphoserine. T26 bears the Phosphothreonine mark. S30, S33, and S62 each carry phosphoserine. Residues 104–124 (TSVFLLTLGISMILVLLCAFL) form a helical membrane-spanning segment.

Belongs to the FAM234 family.

It is found in the membrane. It localises to the golgi outpost. The protein localises to the cytoplasm. The protein resides in the cytoskeleton. Its subcellular location is the microtubule organizing center. The protein is Protein FAM234B of Homo sapiens (Human).